The chain runs to 355 residues: uncharacterized protein (355 aa).

The N-terminal 49 residues, 1-49 (MPMTVVSGRFSTALLPTCFSLSRLHSVKYAAQRRVVFVSRSAHASSASV), are a transit peptide targeting the chloroplast.

Belongs to the methyltransferase superfamily.

Its subcellular location is the plastid. It localises to the chloroplast. The protein resides in the plastoglobule. This is an uncharacterized protein from Arabidopsis thaliana (Mouse-ear cress).